A 157-amino-acid chain; its full sequence is MNIYVIAVGQRLPRWIGEGYQEYAQRLPRQCSLSLVEIAPARRGKSGHPTQWRQDECRRLLAAVPPNSKVIACDERGQSWSTEEVARRLQIWMNEGQDVVLLIGGPDGLAPLCLEQATGLWSLSSLTLPHGLVRVILAEQIYRAFSLLNRHPYHRAS.

S-adenosyl-L-methionine contacts are provided by residues Gly104 and 123–128 (LSSLTL).

It belongs to the RNA methyltransferase RlmH family. In terms of assembly, homodimer.

It localises to the cytoplasm. The enzyme catalyses pseudouridine(1915) in 23S rRNA + S-adenosyl-L-methionine = N(3)-methylpseudouridine(1915) in 23S rRNA + S-adenosyl-L-homocysteine + H(+). Functionally, specifically methylates the pseudouridine at position 1915 (m3Psi1915) in 23S rRNA. The polypeptide is Ribosomal RNA large subunit methyltransferase H (Nitrosococcus oceani (strain ATCC 19707 / BCRC 17464 / JCM 30415 / NCIMB 11848 / C-107)).